A 239-amino-acid polypeptide reads, in one-letter code: Phosphoribosylaminoimidazole-succinocarboxamide synthase (239 aa).

The protein belongs to the SAICAR synthetase family.

The catalysed reaction is 5-amino-1-(5-phospho-D-ribosyl)imidazole-4-carboxylate + L-aspartate + ATP = (2S)-2-[5-amino-1-(5-phospho-beta-D-ribosyl)imidazole-4-carboxamido]succinate + ADP + phosphate + 2 H(+). Its pathway is purine metabolism; IMP biosynthesis via de novo pathway; 5-amino-1-(5-phospho-D-ribosyl)imidazole-4-carboxamide from 5-amino-1-(5-phospho-D-ribosyl)imidazole-4-carboxylate: step 1/2. The polypeptide is Phosphoribosylaminoimidazole-succinocarboxamide synthase (Bacillus cereus (strain G9842)).